We begin with the raw amino-acid sequence, 355 residues long: Guanine nucleotide-binding protein G(o) subunit alpha (355 aa).

Residues 1–17 are compositionally biased toward low complexity; sequence MGCASSAEERAAPSAQQ. Positions 1–24 are disordered; sequence MGCASSAEERAAPSAQQADREKLK. The N-myristoyl glycine moiety is linked to residue G2. The S-palmitoyl cysteine moiety is linked to residue C3. The G-alpha domain maps to 32-355; that stretch reads KDIKLLLLGA…ANNLRGCGLY (324 aa). The interval 35-48 is G1 motif; it reads KLLLLGAGESGKST. GTP-binding positions include 40–47, 176–182, 201–205, 201–206, 271–274, and A327; these read GAGESGKS, LRTRVKT, DVGRG, DVGRGQ, and NKKD. Positions 47 and 182 each coordinate Mg(2+). The segment at 174–182 is G2 motif; that stretch reads DILRTRVKT. The tract at residues 197–206 is G3 motif; the sequence is FKLFDVGRGQ. Residues 267–274 form a G4 motif region; sequence ILFLNKKD. Residues 326–330 form a G5 motif region; it reads TATDT.

The protein belongs to the G-alpha family. G(i/o/t/z) subfamily. G proteins are composed of 3 units; alpha, beta and gamma. The alpha chain contains the guanine nucleotide binding site.

Functionally, guanine nucleotide-binding proteins (G proteins) are involved as modulators or transducers in various transmembrane signaling systems. The G(o) protein function is not clear. In Manduca sexta (Tobacco hawkmoth), this protein is Guanine nucleotide-binding protein G(o) subunit alpha.